We begin with the raw amino-acid sequence, 401 residues long: MGETEIEKVSDTTFVLQMGPHHPATHGVLKLLCEFEGERVINIKPDVGYLHRGVEKLSESKTYPGAMTLTDRLDYISSMTNNIGYCLAVERLMGIEPPPRAKFIRTMVSEMTRLSSHLLWLATHALDIGAMTVFLYAFREREQILQFFEKICGARLTVSYPRIGGVRVDIKEHVLDEIYKFMDLMLIRVDEYETLLTENRIWIARTRGVGVIAPEDAVLLGLTGPALRGSGVYYDIRKQIPYDAYSEIDFEVPLGEKGDTYDRYLCRIREMRQSVLIVKQCIEKMPEGKILSDKSPDIDLPHQAKRKIEPGDSLWNGFIAFSEEKQEIMPKGEIYSAIEAPKGELGFYIVSDGSGRPYRMRVRAPSFIHISAIPKLCEGHLLADVIAIIGTLDIVMGEADR.

It belongs to the complex I 49 kDa subunit family. As to quaternary structure, NDH-1 is composed of 14 different subunits. Subunits NuoB, C, D, E, F, and G constitute the peripheral sector of the complex.

It localises to the cell inner membrane. It carries out the reaction a quinone + NADH + 5 H(+)(in) = a quinol + NAD(+) + 4 H(+)(out). Its function is as follows. NDH-1 shuttles electrons from NADH, via FMN and iron-sulfur (Fe-S) centers, to quinones in the respiratory chain. The immediate electron acceptor for the enzyme in this species is believed to be ubiquinone. Couples the redox reaction to proton translocation (for every two electrons transferred, four hydrogen ions are translocated across the cytoplasmic membrane), and thus conserves the redox energy in a proton gradient. This chain is NADH-quinone oxidoreductase subunit D 2, found in Thermodesulfovibrio yellowstonii (strain ATCC 51303 / DSM 11347 / YP87).